The chain runs to 430 residues: Asparagine--tRNA ligase (430 aa).

It belongs to the class-II aminoacyl-tRNA synthetase family. In terms of assembly, homodimer.

It is found in the cytoplasm. The enzyme catalyses tRNA(Asn) + L-asparagine + ATP = L-asparaginyl-tRNA(Asn) + AMP + diphosphate + H(+). In Staphylococcus aureus (strain bovine RF122 / ET3-1), this protein is Asparagine--tRNA ligase.